Consider the following 397-residue polypeptide: N(6)-adenosine-methyltransferase non-catalytic subunit METTL14 (397 aa).

Disordered regions lie at residues 37 to 67 (NAEDINSSRQLNSGGQREEEDGGASSSKKTP) and 368 to 397 (ELLRPKSPPPNSKVLRGRGRGFPRGRGRPR). Residues 40–51 (DINSSRQLNSGG) are compositionally biased toward polar residues. The segment covering 382-397 (LRGRGRGFPRGRGRPR) has biased composition (basic residues).

Belongs to the MT-A70-like family. As to quaternary structure, component of the WMM complex, a N6-methyltransferase complex composed of a catalytic subcomplex, named MAC, and of an associated subcomplex, named MACOM. The MAC subcomplex is composed of Ime4/Mettl3 and Mettl14. The MACOM subcomplex is composed of fl(2)d, Flacc/Xio, Hakai, vir, and, in some cases of nito.

Its subcellular location is the nucleus. Non-catalytic component of the WMM complex, a complex that mediates N6-methyladenosine (m6A) methylation of mRNAs, a modification that plays a role in the efficiency of mRNA splicing and is required for sex determination. In the heterodimer formed with Ime4/Mettl3, Mettl14 constitutes the RNA-binding scaffold that recognizes the substrate rather than the catalytic core. Required for sex determination and dosage compensation via Sxl alternative splicing: m6A methylation acts as a key regulator of Sxl pre-mRNA and promotes female-specific alternative splicing of Sxl, which determines female physiognomy. M6A methylation is also required for neuronal functions. This chain is N(6)-adenosine-methyltransferase non-catalytic subunit METTL14, found in Drosophila melanogaster (Fruit fly).